We begin with the raw amino-acid sequence, 529 residues long: Fibroblast growth factor receptor-like 1 (529 aa).

Residues 1–20 (MTRSPALLLLLLGALPSAEA) form the signal peptide. Topologically, residues 21–374 (ARGPPRMADK…SSSSTSLPWP (354 aa)) are extracellular. Ig-like C2-type domains follow at residues 25 to 111 (PRMA…YTLI), 143 to 233 (PRFT…YKVD), and 242 to 350 (PVLT…AFLT). Residues Cys47 and Cys95 are joined by a disulfide bond. A glycan (N-linked (GlcNAc...) asparagine) is linked at Asn107. The segment at 116–151 (ISPGKESPGPGGSSGGQEDPASQQWARPRFTQPSKM) is disordered. Cys168 and Cys217 form a disulfide bridge. 3 N-linked (GlcNAc...) asparagine glycosylation sites follow: Asn227, Asn251, and Asn289. The cysteines at positions 264 and 334 are disulfide-linked. A helical transmembrane segment spans residues 375-395 (VVIGIPAGAVFILGTVLLWLC). Residues 396 to 529 (QTKKKPCAPA…RIENNGGRVS (134 aa)) lie on the Cytoplasmic side of the membrane. A disordered region spans residues 405-427 (ASTLPVPGHRPPGTSRERSGDKD).

Interacts with FGF2 with a low affinity. In terms of tissue distribution, highly expressed in the kidney, brain and lung. Weakly expressed in the muscle, thymus, lymph node, stomach, intestine, colon and liver. Expressed in fetal cartilaginous structures like the nasal cartilage, the ribs and the sternum as well as in the cartilaginous rudiments of developing bones such as the vertebrae and the pelvic bone. High expression is found in the muscles of the tongue and the diaphragm.

The protein localises to the cell membrane. Functionally, has a negative effect on cell proliferation. In Mus musculus (Mouse), this protein is Fibroblast growth factor receptor-like 1 (Fgfrl1).